The chain runs to 417 residues: Argininosuccinate synthase (417 aa).

A9–S17 serves as a coordination point for ATP. Residue Y87 participates in L-citrulline binding. G117 contacts ATP. Residues T119, N123, and D124 each contribute to the L-aspartate site. Residue N123 coordinates L-citrulline. R127, S175, S184, E260, and Y272 together coordinate L-citrulline.

It belongs to the argininosuccinate synthase family. Type 1 subfamily. Homotetramer.

It localises to the cytoplasm. The enzyme catalyses L-citrulline + L-aspartate + ATP = 2-(N(omega)-L-arginino)succinate + AMP + diphosphate + H(+). It participates in amino-acid biosynthesis; L-arginine biosynthesis; L-arginine from L-ornithine and carbamoyl phosphate: step 2/3. The chain is Argininosuccinate synthase from Oceanobacillus iheyensis (strain DSM 14371 / CIP 107618 / JCM 11309 / KCTC 3954 / HTE831).